The sequence spans 160 residues: 6,7-dimethyl-8-ribityllumazine synthase (160 aa).

5-amino-6-(D-ribitylamino)uracil is bound by residues Trp-28, 59-61, and 82-84; these read SFE and VII. 87–88 serves as a coordination point for (2S)-2-hydroxy-3-oxobutyl phosphate; that stretch reads GT. The Proton donor role is filled by His-90. A 5-amino-6-(D-ribitylamino)uracil-binding site is contributed by Phe-115. Arg-129 provides a ligand contact to (2S)-2-hydroxy-3-oxobutyl phosphate.

This sequence belongs to the DMRL synthase family.

The enzyme catalyses (2S)-2-hydroxy-3-oxobutyl phosphate + 5-amino-6-(D-ribitylamino)uracil = 6,7-dimethyl-8-(1-D-ribityl)lumazine + phosphate + 2 H2O + H(+). It participates in cofactor biosynthesis; riboflavin biosynthesis; riboflavin from 2-hydroxy-3-oxobutyl phosphate and 5-amino-6-(D-ribitylamino)uracil: step 1/2. Functionally, catalyzes the formation of 6,7-dimethyl-8-ribityllumazine by condensation of 5-amino-6-(D-ribitylamino)uracil with 3,4-dihydroxy-2-butanone 4-phosphate. This is the penultimate step in the biosynthesis of riboflavin. This is 6,7-dimethyl-8-ribityllumazine synthase from Clavibacter michiganensis subsp. michiganensis (strain NCPPB 382).